Consider the following 323-residue polypeptide: MAVSLMQQPDKVYDVIIIGAGPAGTTAAIYTARAGWKTLVLYRAEADGALGVTQKIENYPGVPGPLSGYELLKIMREQAKSFGAEFVRGKVIATDLNSDPKKVYTIDGREFRGKTIIVASGAMERANKFKGEEEFLGRGVSYCGVCDAAFFKDQPVAVIGDDDYAIEEAEFIARFANKVFFVVPGSKIKAPPEVIEHFEKLPNVEILLRHRPIEIVGDQVVKGIKLKDLEKKEEKLLEVNGVFIFLGGTKPSVDFLMGQVEMTEGDCIVVNEEMMTSVPGVFAAGDVLCNEVKQAVVAAAMGCKAALAVDKFLSGKKKIVPQW.

42 to 49 provides a ligand contact to FAD; it reads YRAEADGA. An intrachain disulfide couples cysteine 143 to cysteine 146. 286–295 lines the FAD pocket; the sequence is DVLCNEVKQA.

This sequence belongs to the class-II pyridine nucleotide-disulfide oxidoreductase family. In terms of assembly, homodimer. FAD serves as cofactor.

The protein localises to the cytoplasm. It carries out the reaction [thioredoxin]-dithiol + NADP(+) = [thioredoxin]-disulfide + NADPH + H(+). This chain is Thioredoxin reductase (trxB), found in Aquifex aeolicus (strain VF5).